The sequence spans 193 residues: Surfactant protein C (193 aa).

A propeptide spanning residues 1-23 (MDMSSKEVLMESPPDYSAGPRSQ) is cleaved from the precursor. Residues cysteine 28 and cysteine 29 are each lipidated (S-palmitoyl cysteine). The propeptide occupies 59–193 (HMSQKHTEMV…LCGELPLYYI (135 aa)). The BRICHOS domain maps to 94–193 (FSIGSTGIVV…LCGELPLYYI (100 aa)). Cysteine 121 and cysteine 185 are joined by a disulfide. Positions 147-170 (KPSTPTSKLGQEEGHDTGSESDSS) are disordered.

The protein resides in the secreted. Its subcellular location is the extracellular space. It localises to the surface film. In terms of biological role, pulmonary surfactant associated proteins promote alveolar stability by lowering the surface tension at the air-liquid interface in the peripheral air spaces. This chain is Surfactant protein C, found in Mus musculus (Mouse).